The primary structure comprises 509 residues: L-aspartate semialdehyde sulfurtransferase (509 aa).

The Cysteine persulfide intermediate role is filled by Cys-133. CBS domains lie at Leu-394–Thr-450 and Met-455–Lys-509. S-methyl-5'-thioadenosine is bound by residues Ser-395, Ile-399, and His-421. Residues Asp-439, Thr-456, Ile-460, and Asn-479–Gly-482 each bind S-adenosyl-L-methionine. Position 497–500 (Thr-497–Asp-500) interacts with S-methyl-5'-thioadenosine.

Belongs to the L-aspartate semialdehyde sulfurtransferase family. As to quaternary structure, homodimer. May form a complex with MJ0099.

It catalyses the reaction L-aspartate 4-semialdehyde + reduced 2[4Fe-4S]-[ferredoxin] + hydrogen sulfide + 3 H(+) = oxidized 2[4Fe-4S]-[ferredoxin] + L-homocysteine + H2O. It participates in amino-acid biosynthesis. Its activity is regulated as follows. The ligand-induced conformational reorganization of the protein could be an important regulatory mechanism. Its function is as follows. Required for O-acetylhomoserine sulfhydrylase (OAHS)-independent homocysteine (Hcy) biosynthesis. Together with MJ0099, catalyzes the condensation of sulfide with aspartate semialdehyde to generate homocysteine. Likely functions through persulfide intermediate. The protein is L-aspartate semialdehyde sulfurtransferase of Methanocaldococcus jannaschii (strain ATCC 43067 / DSM 2661 / JAL-1 / JCM 10045 / NBRC 100440) (Methanococcus jannaschii).